We begin with the raw amino-acid sequence, 230 residues long: tRNA (guanine-N(1)-)-methyltransferase (230 aa).

S-adenosyl-L-methionine-binding positions include glycine 114 and 138–143; that span reads IGDYVL.

The protein belongs to the RNA methyltransferase TrmD family. In terms of assembly, homodimer.

Its subcellular location is the cytoplasm. It carries out the reaction guanosine(37) in tRNA + S-adenosyl-L-methionine = N(1)-methylguanosine(37) in tRNA + S-adenosyl-L-homocysteine + H(+). In terms of biological role, specifically methylates guanosine-37 in various tRNAs. In Rhodococcus jostii (strain RHA1), this protein is tRNA (guanine-N(1)-)-methyltransferase.